Consider the following 403-residue polypeptide: Ribosomal RNA large subunit methyltransferase I (403 aa).

Positions 9-88 constitute a PUA domain; sequence YPRLVLSKGR…ESIDIAFFTR (80 aa).

It belongs to the methyltransferase superfamily. RlmI family.

It is found in the cytoplasm. The enzyme catalyses cytidine(1962) in 23S rRNA + S-adenosyl-L-methionine = 5-methylcytidine(1962) in 23S rRNA + S-adenosyl-L-homocysteine + H(+). Functionally, specifically methylates the cytosine at position 1962 (m5C1962) of 23S rRNA. The chain is Ribosomal RNA large subunit methyltransferase I from Salmonella paratyphi A (strain ATCC 9150 / SARB42).